The chain runs to 239 residues: Fatty acid metabolism regulator protein (239 aa).

The 69-residue stretch at 6 to 74 folds into the HTH gntR-type domain; it reads QSPAGFAEEY…HGKPTKVNNF (69 aa). The segment at residues 34 to 53 is a DNA-binding region (H-T-H motif); it reads ERELSELIGVTRTTLREVLQ.

Homodimer.

Its subcellular location is the cytoplasm. In terms of biological role, multifunctional regulator of fatty acid metabolism. The polypeptide is Fatty acid metabolism regulator protein (Shigella flexneri).